A 461-amino-acid polypeptide reads, in one-letter code: pre-mRNA splicing regulator USH1G (461 aa).

ANK repeat units follow at residues 31 to 60, 64 to 93, and 97 to 126; these read DGMTPTLWAAYHGNLESLRLIVSRGGDPDK, WGNTPLHLAASNGHLHCLSFLVSFGANIWC, and DYHTPLDMAAMKGHMECVRYLDSIAAKQSS. Disordered stretches follow at residues 208–243 and 332–368; these read GTARGKTKMQKKLERRKQGGEGTFKVSEDGRKSARS and EDGGLDGVGAPRGRLQSSPSLDDDSLGSANSLQDRSC. Residues 210–222 are compositionally biased toward basic residues; sequence ARGKTKMQKKLER. The SAM domain occupies 385–447; that stretch reads LEPETSPLET…KILGAVRRRR (63 aa). Phosphoserine; by CK2 is present on S422.

In terms of assembly, part of a complex composed of USH1C, USH1G and MYO7A. Interacts with USH1C (via the first PDZ domain). Interacts with PDZD7. Interacts with CDH23 and PCDH15; these interactions may recruit USH1G to the plasma membrane. Interacts with intraflagellar transport proteins IFT20, IFT52 and IFT57. Interacts with splicing factors SF3B1, PRPF6, PRPF31 and SON. Interacts with the U4/U6.U5 tri-small nuclear ribonucleoprotein (tri-snRNP) complex in the presence of pre-mRNAs. Interacts (via SAM domain) with MAGI2 (via PDZ 6 domain); the interaction is triggered by phosphorylation of USH1G by CK2 and negatively regulates MAGI2-mediated endocytosis. In terms of tissue distribution, expressed in vestibule of the inner ear, eye and small intestine.

It is found in the cytoplasm. The protein resides in the cytosol. The protein localises to the cytoskeleton. It localises to the cell membrane. Its subcellular location is the cell projection. It is found in the cilium. The protein resides in the nucleus speckle. The protein localises to the nucleus. It localises to the cajal body. Its subcellular location is the microtubule organizing center. It is found in the centrosome. The protein resides in the photoreceptor inner segment. Functionally, plays a role in pre-mRNA splicing by regulating the release and transfer of U4/U6.U5 tri-small nuclear ribonucleoprotein (tri-snRNP) complexes from their assembly site in Cajal bodies to nuclear speckles, thereby contributing to the assembly of the pre-catalytic spliceosome on target pre-mRNAs. May also participate in recycling of snRNPs back to Cajal bodies during splicing. Plays a role in regulating MAGI2-mediated endocytosis. Anchoring/scaffolding protein that is a part of the functional network formed by USH1C, USH1G, CDH23 and MYO7A that mediates mechanotransduction in cochlear hair cells. Required for normal development and maintenance of cochlear hair cell bundles. Required for normal hearing. This chain is pre-mRNA splicing regulator USH1G (USH1G), found in Homo sapiens (Human).